We begin with the raw amino-acid sequence, 431 residues long: Forkhead box protein N2 (431 aa).

Positions 112 to 208 (KPPYSFSLLI…QALKKQPFSS (97 aa)) form a DNA-binding region, fork-head. The interval 364-387 (DSGYASQPCAKISEKGQSGKKMRK) is disordered.

The protein localises to the nucleus. Functionally, binds to the purine-rich region in HTLV-I LTR. The polypeptide is Forkhead box protein N2 (FOXN2) (Homo sapiens (Human)).